Here is a 295-residue protein sequence, read N- to C-terminus: Trimeric intracellular cation channel type 1B.1 (295 aa).

Topologically, residues 1-27 (MVVPESFQLDQEILLDAGAQLHRLKMY) are lumenal. A helical membrane pass occupies residues 28 to 45 (PYFDVAHYLLMIIEVRDD). Topologically, residues 46–56 (LGSAASIFSRK) are cytoplasmic. Residues 57 to 80 (HPLSCWLSSMLMCFADAFLANFLL) traverse the membrane as a discontinuously helical segment. The Lumenal segment spans residues 81–89 (GEPVIAPFK). A helical transmembrane segment spans residues 90–107 (RHDDIILATIIWYLVFYA). Residues 108-119 (PFDGIYKIAKIT) lie on the Cytoplasmic side of the membrane. The helical transmembrane segment at 120–148 (PVKCVLAVMKEVKRAYKVSHGVSHAAKLY) threads the bilayer. Residues K129 and R133 each contribute to the a 1,2-diacyl-sn-glycero-3-phospho-(1D-myo-inositol-4,5-bisphosphate) site. Over 149-150 (PN) the chain is Lumenal. A discontinuously helical transmembrane segment spans residues 151–177 (SYIVQVLVGTAKGAGSGIVRTLEQLVR). S166 serves as a coordination point for a 1,2-diacyl-sn-glycero-3-phospho-(1D-myo-inositol-4,5-bisphosphate). At 178-188 (GVWLPTHNELL) the chain is on the cytoplasmic side. Residues 189-210 (RPSFATKACVVAASVLALEKSG) form a helical membrane-spanning segment. At 211–215 (TYLTA) the chain is on the lumenal side. Residues 216-239 (PHDLVYLVIVGFFVYFKLSAVILH) form a helical membrane-spanning segment. At 240–295 (VTDPFAPIENLFCAIFMGGIWDAVSRALAASRDRRAAGAHSNENGSSISTPEKKDQ) the chain is on the cytoplasmic side. The tract at residues 274 to 295 (RAAGAHSNENGSSISTPEKKDQ) is disordered.

This sequence belongs to the TMEM38 family. As to quaternary structure, homotrimer; trimerization probably requires binding to phosphatidylinositol 4,5-bisphosphate (PIP2).

Its subcellular location is the endoplasmic reticulum membrane. Functionally, potassium channel that mediates transmembrane potassium transport. Might be required for maintenance of rapid intracellular calcium release. May act as a counter-ion channel that functions in synchronization with calcium release from intracellular stores. Binds phosphatidylinositol 4,5-bisphosphate (PIP2). This chain is Trimeric intracellular cation channel type 1B.1, found in Caenorhabditis elegans.